We begin with the raw amino-acid sequence, 446 residues long: Phosphoglucosamine mutase (446 aa).

The active-site Phosphoserine intermediate is the serine 102. Positions 102, 241, 243, and 245 each coordinate Mg(2+). Residue serine 102 is modified to Phosphoserine.

It belongs to the phosphohexose mutase family. It depends on Mg(2+) as a cofactor. Post-translationally, activated by phosphorylation.

It carries out the reaction alpha-D-glucosamine 1-phosphate = D-glucosamine 6-phosphate. Functionally, catalyzes the conversion of glucosamine-6-phosphate to glucosamine-1-phosphate. The protein is Phosphoglucosamine mutase of Xylella fastidiosa (strain M23).